Consider the following 472-residue polypeptide: Succinate-semialdehyde dehydrogenase [NADP(+)] (472 aa).

NADP(+)-binding positions include 134–135 (WN), 158–161 (KHAS), and 210–211 (GS). Catalysis depends on glutamate 232, which acts as the Proton acceptor. Leucine 233 provides a ligand contact to NADP(+). Residue cysteine 266 is the Nucleophile of the active site. Residue glutamate 363 coordinates NADP(+).

This sequence belongs to the aldehyde dehydrogenase family.

The catalysed reaction is succinate semialdehyde + NADP(+) + H2O = succinate + NADPH + 2 H(+). Catalyzes the NADP(+)-dependent oxidation of succinate semialdehyde to succinate. It is believed to be the main source of succinate semialdehyde dehydrogenase activity in Mycobacterium. This Mycobacterium avium (strain 104) protein is Succinate-semialdehyde dehydrogenase [NADP(+)] (gabD1).